The following is an 88-amino-acid chain: MGGIGIWQLAIITVIVILLFGTKKLRGIGGDLGGAIKGFKKAIKEDNDKDSTQVDDKDSTQVDDNAKQPSNKKVEENIKEQSKEKDRA.

A helical transmembrane segment spans residues 1–21 (MGGIGIWQLAIITVIVILLFG). Positions 46–88 (DNDKDSTQVDDKDSTQVDDNAKQPSNKKVEENIKEQSKEKDRA) are disordered.

Belongs to the TatA/E family. The Tat system comprises two distinct complexes: a TatABC complex, containing multiple copies of TatA, TatB and TatC subunits, and a separate TatA complex, containing only TatA subunits. Substrates initially bind to the TatABC complex, which probably triggers association of the separate TatA complex to form the active translocon.

The protein resides in the cell inner membrane. Its function is as follows. Part of the twin-arginine translocation (Tat) system that transports large folded proteins containing a characteristic twin-arginine motif in their signal peptide across membranes. TatA could form the protein-conducting channel of the Tat system. The polypeptide is Sec-independent protein translocase protein TatA (Psychromonas ingrahamii (strain DSM 17664 / CCUG 51855 / 37)).